A 283-amino-acid polypeptide reads, in one-letter code: Polyamine aminopropyltransferase (283 aa).

Residues 5–241 (NNWYIEHFER…GWWSVTMARK (237 aa)) enclose the PABS domain. S-methyl-5'-thioadenosine is bound at residue glutamine 35. Spermidine is bound by residues histidine 66 and aspartate 90. Residues aspartate 110 and 141 to 142 (DG) contribute to the S-methyl-5'-thioadenosine site. Residue aspartate 160 is the Proton acceptor of the active site. 160-163 (DSTD) is a binding site for spermidine. Residue proline 167 participates in S-methyl-5'-thioadenosine binding.

This sequence belongs to the spermidine/spermine synthase family. In terms of assembly, homodimer or homotetramer.

The protein resides in the cytoplasm. The enzyme catalyses S-adenosyl 3-(methylsulfanyl)propylamine + putrescine = S-methyl-5'-thioadenosine + spermidine + H(+). The protein operates within amine and polyamine biosynthesis; spermidine biosynthesis; spermidine from putrescine: step 1/1. Its function is as follows. Catalyzes the irreversible transfer of a propylamine group from the amino donor S-adenosylmethioninamine (decarboxy-AdoMet) to putrescine (1,4-diaminobutane) to yield spermidine. This Stenotrophomonas maltophilia (strain K279a) protein is Polyamine aminopropyltransferase.